A 976-amino-acid polypeptide reads, in one-letter code: Protein PLASTID MOVEMENT IMPAIRED 1-RELATED 2 (976 aa).

One can recognise a C2 NT-type domain in the interval 81 to 229; the sequence is IAHFGQRRFD…VLNLSFDYSV (149 aa). The span at 309-319 shows a compositional bias: basic and acidic residues; that stretch reads KQAADSDDSGK. Disordered regions lie at residues 309–343 and 381–419; these read KQAADSDDSGKGVETFQQERSGLEESNDPNTESSR and NLLPKHSVDGTPKSTFSSQVISESSESKSPSAMDDSTEK. Residues 394-414 are compositionally biased toward low complexity; sequence STFSSQVISESSESKSPSAMD.

In terms of biological role, seems not necessary for chloroplast and nuclear photorelocation movements. The protein is Protein PLASTID MOVEMENT IMPAIRED 1-RELATED 2 of Arabidopsis thaliana (Mouse-ear cress).